Consider the following 233-residue polypeptide: Cysteine-rich venom protein LIO1 (233 aa).

The N-terminal stretch at 1–18 is a signal peptide; it reads MIVFILLSFAAVLQQSFG. Residues 37–165 form the SCP domain; that stretch reads VDTHNSYRRS…PYNYFYVCQY (129 aa). Intrachain disulfides connect C74-C152, C91-C166, C147-C163, C185-C192, C188-C197, C210-C228, and C219-C232. Residues 201–233 form the ShKT domain; it reads CTSENVFTNCNDMVKESGCQDERMKSICPASCF.

The protein belongs to the CRISP family. As to expression, expressed by the venom gland.

It localises to the secreted. Its function is as follows. Blocks contraction of smooth muscle elicited by high potassium-induced depolarization, but does not block caffeine-stimulated contraction. May target voltage-gated calcium channels on smooth muscle. This Erythrolamprus poecilogyrus (Water snake) protein is Cysteine-rich venom protein LIO1.